Here is a 537-residue protein sequence, read N- to C-terminus: Atrial natriuretic peptide receptor 3 (537 aa).

The N-terminal stretch at 1 to 20 (MPSLLVLTFSACVLLGWALL) is a signal peptide. The propeptide occupies 21 to 41 (ADCTGGGGSGGAGPGRGRRER). The Extracellular portion of the chain corresponds to 42-477 (EALPPQKIEV…PCKASGGLEE (436 aa)). The N-linked (GlcNAc...) asparagine glycan is linked to asparagine 82. Cystine bridges form between cysteine 104–cysteine 132 and cysteine 209–cysteine 257. N-linked (GlcNAc...) asparagine glycosylation is found at asparagine 289 and asparagine 390. The helical transmembrane segment at 478 to 500 (SAVTGIVVGALLGAGLLMAFYFF) threads the bilayer. Residues 501-537 (RKKYRITIERRNQQEESNVGKHRELREDSIRSHFSVA) are Cytoplasmic-facing.

It belongs to the ANF receptor family. In terms of assembly, homodimer; disulfide-linked. Interacts with OSTN.

It localises to the cell membrane. In terms of biological role, receptor for the natriuretic peptide hormones, binding with similar affinities atrial natriuretic peptide NPPA/ANP, brain natriuretic peptide NPPB/BNP, and C-type natriuretic peptide NPPC/CNP. May function as a clearance receptor for NPPA, NPPB and NPPC, regulating their local concentrations and effects. Acts as a regulator of osteoblast differentiation and bone growth by binding to its ligand osteocrin, thereby preventing binding between NPR3/NPR-C and natriuretic peptides, leading to increase cGMP production. This Bos taurus (Bovine) protein is Atrial natriuretic peptide receptor 3 (NPR3).